We begin with the raw amino-acid sequence, 965 residues long: Collagenase ColQ1 (965 aa).

Positions 1 to 30 (MNKKSKINKVMLSISTMALSLGALQAPASA) are cleaved as a signal peptide. A propeptide spanning residues 31–93 (EEKVPYNVLK…KAAVKQVKES (63 aa)) is cleaved from the precursor. The interval 94-366 (YSMADLNKMN…AVEQITTNYN (273 aa)) is activator domain. The segment at 94–765 (YSMADLNKMN…VFHGIAKDDG (672 aa)) is S1 metalloprotease domain. The interval 376–645 (DLEKIRKEGK…MQQLIDNQDK (270 aa)) is catalytic subdomain. Position 501 (histidine 501) interacts with Zn(2+). The active site involves glutamate 502. Zn(2+)-binding residues include histidine 505 and glutamate 533. The interval 653–765 (DDYLAEHAPK…VFHGIAKDDG (113 aa)) is helper subdomain. A PKD domain is found at 769–850 (APTVNINGPY…ESKSETTVTV (82 aa)). Residues 842–867 (SKSETTVTVKDGSLTESEPNNRPEEA) form a disordered region. Polar residues predominate over residues 845–859 (ETTVTVKDGSLTESE). A collagen-binding domain region spans residues 853–965 (GSLTESEPNN…GDGTYKLSVK (113 aa)).

It belongs to the peptidase M9B family. Collagenase subfamily. Requires Ca(2+) as cofactor. The cofactor is Zn(2+).

The protein resides in the secreted. It catalyses the reaction Digestion of native collagen in the triple helical region at Xaa-|-Gly bonds. With synthetic peptides, a preference is shown for Gly at P3 and P1', Pro and Ala at P2 and P2', and hydroxyproline, Ala or Arg at P3'.. Its activity is regulated as follows. Strongly inhibited by EDTA. Not inhibited by E-64 and PMSF, broad-spectrum cysteine and serine protease inhibitors. Acts as a true collagenase, which is highly active and cleaves natively folded collagen. In vitro, can also cleave gelatin and the synthetic peptide FALGPA (furylacryloyl-Leu-Gly-Pro-Ala). Causes damage on dermal collagen (COL), resulting in gaps in the tissue, which might lead to an accelerated bacterial infiltration and penetration into deeper sites of the host. The chain is Collagenase ColQ1 from Bacillus cereus (strain Q1).